The chain runs to 142 residues: Large ribosomal subunit protein bL19 (142 aa).

Belongs to the bacterial ribosomal protein bL19 family.

In terms of biological role, this protein is located at the 30S-50S ribosomal subunit interface and may play a role in the structure and function of the aminoacyl-tRNA binding site. In Psychrobacter cryohalolentis (strain ATCC BAA-1226 / DSM 17306 / VKM B-2378 / K5), this protein is Large ribosomal subunit protein bL19.